Consider the following 1149-residue polypeptide: FH2 domain-containing protein 1 (1149 aa).

4 disordered regions span residues 18 to 79, 464 to 540, 554 to 660, and 681 to 1149; these read LATA…PPPG, NHDR…SRLS, ESAT…PLLP, and SPKS…PLQK. Pro residues-rich tracts occupy residues 33–48 and 56–79; these read ASPPPPPPPPPPPPCP and PSPPPPLPPPLPGGPPIPPPPPPG. An FH2 domain is found at 88-483; sequence GYSSLGKKKR…QLQRQKEMEQ (396 aa). Residues 464–485 are compositionally biased toward basic and acidic residues; it reads NHDREEQERKQLQRQKEMEQKR. Residues 486-504 are compositionally biased toward polar residues; it reads YSWSTGELGSFGRSSSEND. S501 is modified (phosphoserine). The span at 522–532 shows a compositional bias: low complexity; it reads PRPNSPSYRPP. Polar residues-rich tracts occupy residues 554 to 575 and 591 to 604; these read ESATSSPEDPNKFNSLPRSSPR and SHGPNFTHEPQASK. 2 positions are modified to phosphoserine: S645 and S655. The span at 681–693 shows a compositional bias: polar residues; that stretch reads SPKSLEEGSQLTL. Over residues 784–795 the composition is skewed to basic and acidic residues; sequence MDSRAGGDKQEE. Positions 801 to 822 are enriched in low complexity; sequence GSVSSGAGEAGSSQVSSNSVSS. Over residues 844 to 856 the composition is skewed to basic and acidic residues; the sequence is PKDRPSRGKDAIA. Positions 926 to 947 are enriched in polar residues; sequence ETPSSTDTPLSRRSSVRGTSDT. The segment at 960–1086 is MTBD; microtubule-binding domain; it reads EEPRLPRSSG…VKGGSEDSAS (127 aa). The segment covering 965 to 974 has biased composition (low complexity); sequence PRSSGSISGR. Composition is skewed to polar residues over residues 1042–1052 and 1064–1074; these read ARNTVASSSRS and TGLTRTVSQRQ. Basic and acidic residues predominate over residues 1123–1134; it reads GTTERSSLRLKD.

In terms of assembly, interacts with CEP170. In terms of tissue distribution, brain, heart and lung (at protein level).

Its subcellular location is the golgi apparatus. It localises to the cell projection. The protein localises to the cilium. Its function is as follows. Microtubule-associated formin which regulates both actin and microtubule dynamics. Induces microtubule acetylation and stabilization and actin stress fiber formation. Regulates Golgi ribbon formation. Required for normal cilia assembly. Early in cilia assembly, may assist in the maturation and positioning of the centrosome/basal body, and once cilia assembly has initiated, may also promote cilia elongation by inhibiting disassembly. The polypeptide is FH2 domain-containing protein 1 (Fhdc1) (Mus musculus (Mouse)).